The primary structure comprises 201 residues: RILP-like protein 2 (201 aa).

In terms of domain architecture, RH1 spans 14–108; the sequence is GPEIALDKDP…LKDGPQMGVG (95 aa). Residues 67-155 are a coiled coil; sequence LEMLEALVNQ…AQDELQCYKS (89 aa). Positions 121–197 constitute an RH2 domain; it reads RPRFTLQELR…TVKSLFSFKQ (77 aa). The interval 177 to 201 is disordered; the sequence is SPRENESKEKSTVKSLFSFKQGKQT. The segment covering 179–188 has biased composition (basic and acidic residues); sequence RENESKEKST.

The protein belongs to the RILPL family.

The protein resides in the cytoplasm. Its subcellular location is the cytosol. It is found in the cytoskeleton. The protein localises to the microtubule organizing center. It localises to the centrosome. The protein resides in the cell projection. Its subcellular location is the cilium. In terms of biological role, involved in cell shape and neuronal morphogenesis, positively regulating the establishment and maintenance of dendritic spines. Plays a role in cellular protein transport. In Xenopus tropicalis (Western clawed frog), this protein is RILP-like protein 2 (rilpl2).